Here is a 160-residue protein sequence, read N- to C-terminus: 3-dehydroquinate dehydratase (160 aa).

The Proton acceptor role is filled by Y28. Residues N79, H85, and D92 each contribute to the substrate site. H105 acts as the Proton donor in catalysis. Substrate contacts are provided by residues 106 to 107 (MS) and R116.

The protein belongs to the type-II 3-dehydroquinase family. Homododecamer.

The catalysed reaction is 3-dehydroquinate = 3-dehydroshikimate + H2O. It participates in metabolic intermediate biosynthesis; chorismate biosynthesis; chorismate from D-erythrose 4-phosphate and phosphoenolpyruvate: step 3/7. In terms of biological role, catalyzes a trans-dehydration via an enolate intermediate. The sequence is that of 3-dehydroquinate dehydratase from Gloeobacter violaceus (strain ATCC 29082 / PCC 7421).